A 558-amino-acid chain; its full sequence is Ankyrin repeat protein OPG189 (558 aa).

7 ANK repeats span residues 65–95 (YGEN…NINK), 169–205 (YGCT…DVDK), 209–239 (YGNT…NIDS), 243–272 (NRYT…NVNA), 276–304 (FGTT…ELEI), 339–368 (YNET…DFET), and 372–401 (SGCT…SLKI).

Belongs to the orthopoxvirus OPG189 protein family.

Functionally, contributes to viral release without involving rearrangement of host actin. The protein is Ankyrin repeat protein OPG189 (OPG189) of Vaccinia virus (strain Western Reserve) (VACV).